Here is a 196-residue protein sequence, read N- to C-terminus: MGWWLFPILGYFIGSIPFSYLIPKWLKGIDVRKVGSGNVGATNAIRTTGPVVGGICLLLDALKGFFPVFIATTFSGDPKLVSLTAIATVLGHDFPIFMKFKGGKGVASTLGIIFCLSWPTGIVFTLTWLVIVMLTKYASLGSLVALYISALLGYLFKGYDTGMLILILAVLSTLRHSENIQRLLNGTERKVNLFKR.

5 helical membrane passes run 2–22 (GWWL…SYLI), 51–71 (VVGG…VFIA), 80–100 (LVSL…FMKF), 112–132 (IIFC…LVIV), and 137–156 (YASL…GYLF).

This sequence belongs to the PlsY family. In terms of assembly, probably interacts with PlsX.

The protein resides in the cell inner membrane. The catalysed reaction is an acyl phosphate + sn-glycerol 3-phosphate = a 1-acyl-sn-glycero-3-phosphate + phosphate. Its pathway is lipid metabolism; phospholipid metabolism. In terms of biological role, catalyzes the transfer of an acyl group from acyl-phosphate (acyl-PO(4)) to glycerol-3-phosphate (G3P) to form lysophosphatidic acid (LPA). This enzyme utilizes acyl-phosphate as fatty acyl donor, but not acyl-CoA or acyl-ACP. The sequence is that of Glycerol-3-phosphate acyltransferase from Thermotoga petrophila (strain ATCC BAA-488 / DSM 13995 / JCM 10881 / RKU-1).